Here is a 502-residue protein sequence, read N- to C-terminus: MVVEEDSRLINLQHKYNPTMPEVVEELKRIWDISFPVAAMSILNYLKNMTSVVCMGRLGSLELAGGALAIGFTNITGYSVLSGLATGMEPLCGQAIGSKNPSLASLTLKRTIFLLLLASLPISLLWLNLAPLMLMLRQQHDITRVASLYCSFSLPDLLANSFLHPLRIYLRCKGTTWPLMWCTLVSVLLHLPITAFFTFYISLGVPGVAVSSFLTNFISLSLLLCYIYLENNNNDKTTSKSLCLDTPLMLYGSRDSGENDVWSTLVKFAVPSCIAVCLEWWWYEFMTVLAGYLPEPKVALAAAAIVIQTTSLMYTIPTALSAAVSTRVSNELGAGRPEKAKTAATVAVGAAVAVSVFGLVGTTVGREAWGKVFTADKVVLELTAAVIPVIGACELANCPQTISCGILRGSARPGIGAKINFYAFYVVGAPVAVVLAFVWGLGFMGLCYGLLGAQLACAISILTVVYNTDWNKESLKAHDLVGKNVISPNVDQIIVKCEEGLH.

A run of 12 helical transmembrane segments spans residues 30-50, 61-81, 112-132, 145-165, 185-205, 207-227, 261-283, 298-318, 344-364, 378-398, 419-439, and 447-467; these read IWDI…KNMT, LELA…YSVL, IFLL…LAPL, VASL…FLHP, VSVL…SLGV, GVAV…LCYI, VWST…WWWY, VALA…TIPT, ATVA…GTTV, VVLE…LANC, INFY…AFVW, and CYGL…VVYN.

Belongs to the multi antimicrobial extrusion (MATE) (TC 2.A.66.1) family.

The protein localises to the membrane. The polypeptide is Protein DETOXIFICATION 55 (Arabidopsis thaliana (Mouse-ear cress)).